A 329-amino-acid chain; its full sequence is 4-hydroxythreonine-4-phosphate dehydrogenase (329 aa).

Residues His-136 and Thr-137 each contribute to the substrate site. Residues His-166, His-211, and His-266 each coordinate a divalent metal cation. The substrate site is built by Lys-274, Asn-283, and Arg-292.

This sequence belongs to the PdxA family. Homodimer. Zn(2+) is required as a cofactor. Requires Mg(2+) as cofactor. It depends on Co(2+) as a cofactor.

It is found in the cytoplasm. The catalysed reaction is 4-(phosphooxy)-L-threonine + NAD(+) = 3-amino-2-oxopropyl phosphate + CO2 + NADH. Its pathway is cofactor biosynthesis; pyridoxine 5'-phosphate biosynthesis; pyridoxine 5'-phosphate from D-erythrose 4-phosphate: step 4/5. Functionally, catalyzes the NAD(P)-dependent oxidation of 4-(phosphooxy)-L-threonine (HTP) into 2-amino-3-oxo-4-(phosphooxy)butyric acid which spontaneously decarboxylates to form 3-amino-2-oxopropyl phosphate (AHAP). This chain is 4-hydroxythreonine-4-phosphate dehydrogenase, found in Salmonella typhi.